Here is a 250-residue protein sequence, read N- to C-terminus: Probable transcriptional regulatory protein DP2908 (250 aa).

Belongs to the TACO1 family.

Its subcellular location is the cytoplasm. The polypeptide is Probable transcriptional regulatory protein DP2908 (Desulfotalea psychrophila (strain LSv54 / DSM 12343)).